Here is a 1342-residue protein sequence, read N- to C-terminus: DNA-directed RNA polymerase subunit beta (1342 aa).

Belongs to the RNA polymerase beta chain family. In terms of assembly, the RNAP catalytic core consists of 2 alpha, 1 beta, 1 beta' and 1 omega subunit. When a sigma factor is associated with the core the holoenzyme is formed, which can initiate transcription.

It catalyses the reaction RNA(n) + a ribonucleoside 5'-triphosphate = RNA(n+1) + diphosphate. Its function is as follows. DNA-dependent RNA polymerase catalyzes the transcription of DNA into RNA using the four ribonucleoside triphosphates as substrates. This chain is DNA-directed RNA polymerase subunit beta, found in Tolumonas auensis (strain DSM 9187 / NBRC 110442 / TA 4).